Consider the following 733-residue polypeptide: Neutral ceramidase 3 (733 aa).

The first 25 residues, 1-25 (MTRWSMSMHCTLFLLFLLRLTCIFS), serve as a signal peptide directing secretion. Catalysis depends on S307, which acts as the Nucleophile. N325 carries an N-linked (GlcNAc...) asparagine glycan.

The protein belongs to the neutral ceramidase family.

It localises to the secreted. Its subcellular location is the endoplasmic reticulum. It is found in the golgi apparatus. The catalysed reaction is an N-acylsphing-4-enine + H2O = sphing-4-enine + a fatty acid. In terms of biological role, hydrolyzes the sphingolipid ceramide into sphingosine and free fatty acid. Promotes oxidative stress resistance. The protein is Neutral ceramidase 3 of Arabidopsis thaliana (Mouse-ear cress).